The sequence spans 349 residues: S-adenosylmethionine:tRNA ribosyltransferase-isomerase (349 aa).

This sequence belongs to the QueA family. As to quaternary structure, monomer.

It localises to the cytoplasm. It catalyses the reaction 7-aminomethyl-7-carbaguanosine(34) in tRNA + S-adenosyl-L-methionine = epoxyqueuosine(34) in tRNA + adenine + L-methionine + 2 H(+). It participates in tRNA modification; tRNA-queuosine biosynthesis. In terms of biological role, transfers and isomerizes the ribose moiety from AdoMet to the 7-aminomethyl group of 7-deazaguanine (preQ1-tRNA) to give epoxyqueuosine (oQ-tRNA). The chain is S-adenosylmethionine:tRNA ribosyltransferase-isomerase from Parabacteroides distasonis (strain ATCC 8503 / DSM 20701 / CIP 104284 / JCM 5825 / NCTC 11152).